A 302-amino-acid chain; its full sequence is Oxygen-dependent coproporphyrinogen-III oxidase (302 aa).

Serine 94 contacts substrate. 2 residues coordinate a divalent metal cation: histidine 98 and histidine 108. Residue histidine 108 is the Proton donor of the active site. Substrate is bound at residue 110-112; sequence NVR. Residues histidine 147 and histidine 177 each coordinate a divalent metal cation. Residues 242–277 form an important for dimerization region; the sequence is YVEFNLVYDRGTLFGLQTGGRTESILMSMPPLARWE. 260–262 lines the substrate pocket; that stretch reads GGR.

This sequence belongs to the aerobic coproporphyrinogen-III oxidase family. Homodimer. It depends on a divalent metal cation as a cofactor.

The protein localises to the cytoplasm. It carries out the reaction coproporphyrinogen III + O2 + 2 H(+) = protoporphyrinogen IX + 2 CO2 + 2 H2O. The protein operates within porphyrin-containing compound metabolism; protoporphyrin-IX biosynthesis; protoporphyrinogen-IX from coproporphyrinogen-III (O2 route): step 1/1. Functionally, involved in the heme biosynthesis. Catalyzes the aerobic oxidative decarboxylation of propionate groups of rings A and B of coproporphyrinogen-III to yield the vinyl groups in protoporphyrinogen-IX. In Aeromonas salmonicida (strain A449), this protein is Oxygen-dependent coproporphyrinogen-III oxidase.